We begin with the raw amino-acid sequence, 41 residues long: Large ribosomal subunit protein bL36B (41 aa).

Belongs to the bacterial ribosomal protein bL36 family.

The chain is Large ribosomal subunit protein bL36B from Actinobacillus pleuropneumoniae serotype 5b (strain L20).